The following is a 633-amino-acid chain: Pesticidal crystal protein Cry2Aa (633 aa).

It belongs to the delta endotoxin family.

Its function is as follows. Promotes colloidosmotic lysis by binding to the midgut epithelial cells of both dipteran (Aedes aegypti) and lepidopteran (Manduca sexta) larvae. In Bacillus thuringiensis subsp. kurstaki, this protein is Pesticidal crystal protein Cry2Aa (cry2Aa).